Here is a 121-residue protein sequence, read N- to C-terminus: Small ribosomal subunit protein uS13 (121 aa).

The interval 91–121 is disordered; that stretch reads HRRGLPVRGQKTKNNARTRKGPVKTVANKKK.

This sequence belongs to the universal ribosomal protein uS13 family. Part of the 30S ribosomal subunit. Forms a loose heterodimer with protein S19. Forms two bridges to the 50S subunit in the 70S ribosome.

Its function is as follows. Located at the top of the head of the 30S subunit, it contacts several helices of the 16S rRNA. In the 70S ribosome it contacts the 23S rRNA (bridge B1a) and protein L5 of the 50S subunit (bridge B1b), connecting the 2 subunits; these bridges are implicated in subunit movement. Contacts the tRNAs in the A and P-sites. The sequence is that of Small ribosomal subunit protein uS13 from Staphylococcus carnosus (strain TM300).